We begin with the raw amino-acid sequence, 100 residues long: UPF0213 protein YhbQ (100 aa).

One can recognise a GIY-YIG domain in the interval 2–77; sequence TPWFLYLIRT…KQLTKRQKER (76 aa).

The protein belongs to the UPF0213 family.

This Escherichia coli O1:K1 / APEC protein is UPF0213 protein YhbQ.